The chain runs to 315 residues: Mycothiol acetyltransferase (315 aa).

N-acetyltransferase domains lie at 8-145 (VETS…LPLD) and 163-315 (VSLR…DATA). Glu-39 lines the 1D-myo-inositol 2-(L-cysteinylamino)-2-deoxy-alpha-D-glucopyranoside pocket. Acetyl-CoA-binding positions include 81 to 83 (LVV) and 89 to 94 (HHGVGT). 1D-myo-inositol 2-(L-cysteinylamino)-2-deoxy-alpha-D-glucopyranoside is bound by residues Glu-190, Lys-229, and Glu-243. 247 to 249 (LGV) is a binding site for acetyl-CoA. Tyr-281 provides a ligand contact to 1D-myo-inositol 2-(L-cysteinylamino)-2-deoxy-alpha-D-glucopyranoside. 286–291 (NTVAIR) provides a ligand contact to acetyl-CoA.

Belongs to the acetyltransferase family. MshD subfamily. In terms of assembly, monomer.

It carries out the reaction 1D-myo-inositol 2-(L-cysteinylamino)-2-deoxy-alpha-D-glucopyranoside + acetyl-CoA = mycothiol + CoA + H(+). In terms of biological role, catalyzes the transfer of acetyl from acetyl-CoA to desacetylmycothiol (Cys-GlcN-Ins) to form mycothiol. This Sanguibacter keddieii (strain ATCC 51767 / DSM 10542 / NCFB 3025 / ST-74) protein is Mycothiol acetyltransferase.